Consider the following 649-residue polypeptide: Stress-70 protein, mitochondrial (649 aa).

A mitochondrion-targeting transit peptide spans 1–46; it reads MISASRAAAARLVGAAASRGPTAARHKDGWNGLSHEAFRIVSRRDY. The interval 1-432 is interaction with NFS1; the sequence is MISASRAAAA…IQGGVLAGDV (432 aa). Residues Thr-63 and Asn-64 each coordinate ADP. The nucleotide-binding domain (NBD) stretch occupies residues 63–431; sequence TNSCVAVMEG…AIQGGVLAGD (369 aa). Lys-76 is subject to N6-acetyllysine. Phosphothreonine is present on Thr-87. N6-acetyllysine; alternate is present on residues Lys-135 and Lys-138. 2 positions are modified to N6-succinyllysine; alternate: Lys-135 and Lys-138. N6-acetyllysine is present on Lys-143. Lys-206 is modified (N6-acetyllysine; alternate). The residue at position 206 (Lys-206) is an N6-succinyllysine; alternate. Lys-206 bears the N6-malonyllysine; alternate mark. N6-acetyllysine occurs at positions 234 and 288. Residue Lys-300 is modified to N6-acetyllysine; alternate. Lys-300 is modified (N6-succinyllysine; alternate). 3 residues coordinate ADP: Glu-313, Lys-316, and Ser-320. Lys-368 is subject to N6-succinyllysine. Residues Gly-388 and Arg-391 each contribute to the ADP site. The residue at position 394 (Lys-394) is an N6-succinyllysine. Ser-408 carries the phosphoserine modification. Residues 432–441 form an interdomain linker region; sequence VTDVLLLDVT. Residues Lys-565, Lys-598, and Lys-638 each carry the N6-acetyllysine; alternate modification. 3 positions are modified to N6-succinyllysine; alternate: Lys-565, Lys-598, and Lys-638.

It belongs to the heat shock protein 70 family. As to quaternary structure, interacts strongly with the intermediate form of FXN and weakly with its mature form. Interacts with HSCB. Associates with the mitochondrial contact site and cristae organizing system (MICOS) complex, composed of at least MICOS10/MIC10, CHCHD3/MIC19, CHCHD6/MIC25, APOOL/MIC27, IMMT/MIC60, APOO/MIC23/MIC26 and QIL1/MIC13. This complex was also known under the names MINOS or MitOS complex. The MICOS complex associates with mitochondrial outer membrane proteins SAMM50, MTX1, MTX2 and DNAJC11, mitochondrial inner membrane protein TMEM11 and with HSPA9. Interacts with DNLZ, the interaction is required to prevent self-aggregation. Interacts with TESPA1. Interacts with PDPN. Interacts with NFU1, NFS1 and ISCU. Interacts with TP53; the interaction promotes TP53 degradation. Interacts (via SBD domain) with UBXN2A; the interaction with UBXN2A inhibits HSPA9/MOT-2 interaction with and degradation of TP53, thereby promotes TP53 translocation to the nucleus. Interacts with ITPR1 AND VDAC1; this interaction couples ITPR1 to VDAC1. Component of the TIM23 mitochondrial inner membrane pre-sequence translocase complex.

The protein localises to the mitochondrion. It localises to the nucleus. Its subcellular location is the nucleolus. The protein resides in the cytoplasm. It is found in the mitochondrion matrix. The catalysed reaction is ATP + H2O = ADP + phosphate + H(+). With respect to regulation, the chaperone activity is regulated by ATP-induced allosteric coupling of the nucleotide-binding (NBD) and substrate-binding (SBD) domains. ATP binding in the NBD leads to a conformational change in the NBD, which is transferred through the interdomain linker (IDL) to the substrate-binding domain (SBD). This elicits a reduced substrate affinity and a faster substrate exchange rate. Upon hydrolysis of ATP to ADP, the protein undergoes a conformational change that increases its affinity for substrate proteins. It cycles through repeated phases of ATP hydrolysis and nucleotide exchange, facilitating repeated cycles of substrate binding and release. Functions in collaboration with co-chaperones. Functions with the co-chaperone, DNLZ, to maintain solubility and regulate ATP hydrolysis. Nucleotide exchange factors, GRPEL1 and GRPEL2, accelerate nucleotide exchange. Mitochondrial chaperone that plays a key role in mitochondrial protein import, folding, and assembly. Plays an essential role in the protein quality control system, the correct folding of proteins, the re-folding of misfolded proteins, and the targeting of proteins for subsequent degradation. These processes are achieved through cycles of ATP binding, ATP hydrolysis, and ADP release, mediated by co-chaperones. In mitochondria, it associates with the TIM (translocase of the inner membrane) protein complex to assist in the import and folding of mitochondrial proteins. Plays an important role in mitochondrial iron-sulfur cluster (ISC) biogenesis, interacts with and stabilizes ISC cluster assembly proteins FXN, NFU1, NFS1 and ISCU. Regulates erythropoiesis via stabilization of ISC assembly. Regulates mitochondrial calcium-dependent apoptosis by coupling two calcium channels, ITPR1 and VDAC1, at the mitochondria-associated endoplasmic reticulum (ER) membrane to facilitate calcium transport from the ER lumen to the mitochondria intermembrane space, providing calcium for the downstream calcium channel MCU, which releases it into the mitochondrial matrix. Although primarily located in the mitochondria, it is also found in other cellular compartments. In the cytosol, it associates with proteins involved in signaling, apoptosis, or senescence. It may play a role in cell cycle regulation via its interaction with and promotion of degradation of TP53. May play a role in the control of cell proliferation and cellular aging. Protects against reactive oxygen species (ROS). Extracellular HSPA9 plays a cytoprotective role by preventing cell lysis following immune attack by the membrane attack complex by disrupting formation of the complex. The chain is Stress-70 protein, mitochondrial from Canis lupus familiaris (Dog).